Reading from the N-terminus, the 120-residue chain is Large ribosomal subunit protein uL18 (120 aa).

This sequence belongs to the universal ribosomal protein uL18 family. As to quaternary structure, part of the 50S ribosomal subunit; part of the 5S rRNA/L5/L18/L25 subcomplex. Contacts the 5S and 23S rRNAs.

This is one of the proteins that bind and probably mediate the attachment of the 5S RNA into the large ribosomal subunit, where it forms part of the central protuberance. The polypeptide is Large ribosomal subunit protein uL18 (Nitrobacter winogradskyi (strain ATCC 25391 / DSM 10237 / CIP 104748 / NCIMB 11846 / Nb-255)).